Reading from the N-terminus, the 378-residue chain is Wnt inhibitory factor 1 (378 aa).

A signal peptide spans 1–28 (MAFRTPAVQLHLKACVLLLLGGLLEAAY). Positions 36–175 (MWIDANQARI…PHNAIFFKTC (140 aa)) constitute a WIF domain. Residue Asn-86 is glycosylated (N-linked (GlcNAc...) asparagine). 6 disulfides stabilise this stretch: Cys-138–Cys-175, Cys-180–Cys-190, Cys-184–Cys-196, Cys-212–Cys-222, Cys-216–Cys-228, and Cys-230–Cys-239. EGF-like domains are found at residues 176–205 (QRAK…FYGV), 208–240 (EKAL…SSCE), 243–272 (NCST…VRCE), 272–304 (ELSK…DLCS), and 305–336 (KAVC…RHCN). N-linked (GlcNAc...) asparagine glycosylation occurs at Asn-243. 9 disulfide bridges follow: Cys-244–Cys-254, Cys-248–Cys-260, Cys-262–Cys-271, Cys-276–Cys-286, Cys-280–Cys-292, Cys-294–Cys-303, Cys-308–Cys-318, Cys-312–Cys-324, and Cys-326–Cys-335. The segment at 343-378 (VSNSQRVSPSKHKSPSVAAAKEAPETSQPSETNYVV) is disordered. The segment covering 367–378 (ETSQPSETNYVV) has biased composition (polar residues).

Highly expressed in unsegmented paraxial mesoderm.

It is found in the secreted. Functionally, binds to WNT proteins and inhibits their activities. May be involved in mesoderm segmentation. The sequence is that of Wnt inhibitory factor 1 (wif1) from Danio rerio (Zebrafish).